We begin with the raw amino-acid sequence, 313 residues long: Protein FixB (313 aa).

An FAD-binding site is contributed by 255 to 283 (LYLAVGISGQIQHMVGANASQTIFAINKD).

Belongs to the ETF alpha-subunit/FixB family. As to quaternary structure, heterodimer of FixA and FixB.

It functions in the pathway amine and polyamine metabolism; carnitine metabolism. Its function is as follows. Required for anaerobic carnitine reduction. May bring reductant to CaiA. This chain is Protein FixB, found in Escherichia coli O139:H28 (strain E24377A / ETEC).